The primary structure comprises 503 residues: 11-hydroxysugiol 20-monooxygenase (503 aa).

A helical transmembrane segment spans residues 2–22 (QVLIVASLAFLAAWLVYSRWS). Position 446 (Cys-446) interacts with heme.

This sequence belongs to the cytochrome P450 family. Heme serves as cofactor. As to expression, highly expressed in roots.

It localises to the membrane. The catalysed reaction is 11-hydroxysugiol + reduced [NADPH--hemoprotein reductase] + O2 = 11,20-dihydroxysugiol + oxidized [NADPH--hemoprotein reductase] + H2O + H(+). It catalyses the reaction 11-hydroxyferruginol + reduced [NADPH--hemoprotein reductase] + O2 = 11,20-dihydroxyferruginol + oxidized [NADPH--hemoprotein reductase] + H2O + H(+). It functions in the pathway secondary metabolite biosynthesis; terpenoid biosynthesis. Monooxygenase that oxidizes 11-hydroxysugiol to produce 11,20-dihydroxysugiol. Can oxidize 11-hydroxyferruginol to produce 11,20-dihydroxyferruginol. These products are intermediates in tanshinone biosynthesis. The sequence is that of 11-hydroxysugiol 20-monooxygenase from Salvia miltiorrhiza (Chinese sage).